A 131-amino-acid chain; its full sequence is D-ribose pyranase (131 aa).

The active-site Proton donor is histidine 20. Substrate is bound by residues aspartate 28, histidine 98, and 120-122 (YAN).

The protein belongs to the RbsD / FucU family. RbsD subfamily. In terms of assembly, homodecamer.

The protein resides in the cytoplasm. The enzyme catalyses beta-D-ribopyranose = beta-D-ribofuranose. Its pathway is carbohydrate metabolism; D-ribose degradation; D-ribose 5-phosphate from beta-D-ribopyranose: step 1/2. Catalyzes the interconversion of beta-pyran and beta-furan forms of D-ribose. The polypeptide is D-ribose pyranase (Bacillus mycoides (strain KBAB4) (Bacillus weihenstephanensis)).